We begin with the raw amino-acid sequence, 468 residues long: 3-isopropylmalate dehydratase large subunit (468 aa).

[4Fe-4S] cluster contacts are provided by Cys-349, Cys-409, and Cys-412.

This sequence belongs to the aconitase/IPM isomerase family. LeuC type 1 subfamily. In terms of assembly, heterodimer of LeuC and LeuD. The cofactor is [4Fe-4S] cluster.

It catalyses the reaction (2R,3S)-3-isopropylmalate = (2S)-2-isopropylmalate. Its pathway is amino-acid biosynthesis; L-leucine biosynthesis; L-leucine from 3-methyl-2-oxobutanoate: step 2/4. In terms of biological role, catalyzes the isomerization between 2-isopropylmalate and 3-isopropylmalate, via the formation of 2-isopropylmaleate. This chain is 3-isopropylmalate dehydratase large subunit, found in Ruegeria pomeroyi (strain ATCC 700808 / DSM 15171 / DSS-3) (Silicibacter pomeroyi).